Consider the following 500-residue polypeptide: Glycerol kinase (500 aa).

T11 is an ADP binding site. Positions 11, 12, and 13 each coordinate ATP. Residue T11 participates in sn-glycerol 3-phosphate binding. R15 provides a ligand contact to ADP. Sn-glycerol 3-phosphate is bound by residues R81, E82, Y133, and D242. Positions 81, 82, 133, 242, and 243 each coordinate glycerol. Residues T264 and G307 each contribute to the ADP site. 4 residues coordinate ATP: T264, G307, Q311, and G411. An ADP-binding site is contributed by G411.

Belongs to the FGGY kinase family.

The enzyme catalyses glycerol + ATP = sn-glycerol 3-phosphate + ADP + H(+). It functions in the pathway polyol metabolism; glycerol degradation via glycerol kinase pathway; sn-glycerol 3-phosphate from glycerol: step 1/1. With respect to regulation, inhibited by fructose 1,6-bisphosphate (FBP). Key enzyme in the regulation of glycerol uptake and metabolism. Catalyzes the phosphorylation of glycerol to yield sn-glycerol 3-phosphate. The chain is Glycerol kinase from Rhodopseudomonas palustris (strain BisA53).